A 102-amino-acid polypeptide reads, in one-letter code: Acid shock protein (102 aa).

Residues 1–21 (MKKVLALVVAAAMGLSSAAFA) form the signal peptide. The span at 22 to 41 (AETATTPAPTATTTKAAPAK) shows a compositional bias: low complexity. A propeptide spanning residues 22–58 (AETATTPAPTATTTKAAPAKTTHHKKQHKAAPAQKAQ) is cleaved from the precursor. Residues 22 to 102 (AETATTPAPT…PAKPAAQPAA (81 aa)) form a disordered region. Over residues 80–90 (AAKKHAGKHSH) the composition is skewed to basic residues. Positions 91-102 (QQPAKPAAQPAA) are enriched in low complexity.

This sequence belongs to the Asr family. Proteolytic processing gives rise to the active protein.

Its subcellular location is the periplasm. Its function is as follows. Required for growth and/or survival at acidic conditions. This is Acid shock protein from Escherichia coli (strain 55989 / EAEC).